Reading from the N-terminus, the 252-residue chain is Transcriptional regulatory protein HptR (252 aa).

The region spanning 3–118 is the Response regulatory domain; sequence KVVICDDERI…QLEVILGRLV (116 aa). At Asp-55 the chain carries 4-aspartylphosphate. The HTH araC/xylS-type domain occupies 153 to 250; it reads NQIVDQIKQS…QMSPSDYCKQ (98 aa). DNA-binding regions (H-T-H motif) lie at residues 170–191 and 217–240; these read SDLIQHIDVSESYAMRTFKDHV and HYEIADKVGFSEYKMFSYHFKKYL.

In terms of processing, phosphorylated by HptS.

The protein localises to the cytoplasm. In terms of biological role, member of the two-component regulatory system HptS/HptR that regulates genes involved in hexose phosphate transport system in response to changes in extracellular phosphate sources. Activates uhpT expression to facilitate glucose-6-phosphate/G6P utilization by directly binding to its promoter. Antagonizes CcpA-dependent transcription of a subset of CcpA-regulated genes involved in antibiotic susceptibility. The polypeptide is Transcriptional regulatory protein HptR (hptR) (Staphylococcus aureus (strain MRSA252)).